The chain runs to 2430 residues: Protein TASOR 2 (2430 aa).

Residues S19, S219, and S384 each carry the phosphoserine modification. Disordered stretches follow at residues 416-488 (LDRK…GETA) and 577-648 (RGTS…SQSS). S685 carries the phosphoserine modification. The interval 704–727 (LLLQQKPPDDPVVKPKDRPPSARV) is disordered. Basic and acidic residues predominate over residues 710–723 (PPDDPVVKPKDRPP). 3 positions are modified to phosphoserine: S1025, S1087, and S1172. The segment at 1331 to 1360 (LTESREVSSADNVSVYPSVSEEPVENKERK) is disordered. S1541 carries the phosphoserine modification. The disordered stretch occupies residues 1700-1727 (EAELHKETTGPGTAGPQSNTTSSLKGER). A compositionally biased stretch (polar residues) spans 1714–1723 (GPQSNTTSSL). S1848 bears the Phosphoserine mark. Residue K2007 forms a Glycyl lysine isopeptide (Lys-Gly) (interchain with G-Cter in SUMO2) linkage. Residues S2009, S2037, S2062, and S2066 each carry the phosphoserine modification. The segment at 2046 to 2069 (SDPRPQGQPRRGYTASSLDSSSSW) is disordered.

This sequence belongs to the TASOR family.

This Homo sapiens (Human) protein is Protein TASOR 2.